A 257-amino-acid polypeptide reads, in one-letter code: Imidazole glycerol phosphate synthase subunit HisF (257 aa).

Active-site residues include aspartate 11 and aspartate 130.

This sequence belongs to the HisA/HisF family. As to quaternary structure, heterodimer of HisH and HisF.

The protein localises to the cytoplasm. The enzyme catalyses 5-[(5-phospho-1-deoxy-D-ribulos-1-ylimino)methylamino]-1-(5-phospho-beta-D-ribosyl)imidazole-4-carboxamide + L-glutamine = D-erythro-1-(imidazol-4-yl)glycerol 3-phosphate + 5-amino-1-(5-phospho-beta-D-ribosyl)imidazole-4-carboxamide + L-glutamate + H(+). The protein operates within amino-acid biosynthesis; L-histidine biosynthesis; L-histidine from 5-phospho-alpha-D-ribose 1-diphosphate: step 5/9. Functionally, IGPS catalyzes the conversion of PRFAR and glutamine to IGP, AICAR and glutamate. The HisF subunit catalyzes the cyclization activity that produces IGP and AICAR from PRFAR using the ammonia provided by the HisH subunit. This is Imidazole glycerol phosphate synthase subunit HisF from Shewanella sp. (strain ANA-3).